The sequence spans 103 residues: Large ribosomal subunit protein mL63 (103 aa).

It belongs to the mitochondrion-specific ribosomal protein mL63 family.

It is found in the mitochondrion. The chain is Large ribosomal subunit protein mL63 (mrpl57) from Danio rerio (Zebrafish).